The sequence spans 230 residues: MYDIKKWRHIFKLDPAKHISDDDLDAICMSQTDAIMIGGTDDVTEDNVIHLMSKIRRYPLPLVLEISNIESVMPGFDFYFVPTVLNSTDVAFHNGTLLEALKTYGHSIDFEEVIFEGYVVCNADSKVAKHTKANTDLTTEDLEAYAQMVNHMYRLPVMYIEYSGIYGDVSKVQAVSEHLTETQLFYGGGISSEQQATEMAAIADTIIVGDIIYKDIKKALKTVKIKESSK.

Lysine 12 lines the sn-glycerol 1-phosphate pocket. Mg(2+) contacts are provided by aspartate 14 and threonine 40. Sn-glycerol 1-phosphate is bound by residues 159–164, glycine 189, and 209–210; these read YIEYSG and GD.

It belongs to the GGGP/HepGP synthase family. Group I subfamily. In terms of assembly, homodimer. Mg(2+) is required as a cofactor.

The enzyme catalyses sn-glycerol 1-phosphate + all-trans-heptaprenyl diphosphate = 3-heptaprenyl-sn-glycero-1-phosphate + diphosphate. It participates in membrane lipid metabolism; glycerophospholipid metabolism. Prenyltransferase that catalyzes in vivo the transfer of the heptaprenyl moiety of heptaprenyl pyrophosphate (HepPP; 35 carbon atoms) to the C3 hydroxyl of sn-glycerol-1-phosphate (G1P), producing heptaprenylglyceryl phosphate (HepGP). This reaction is an ether-bond-formation step in the biosynthesis of archaea-type G1P-based membrane lipids found in Bacillales. This is Heptaprenylglyceryl phosphate synthase from Staphylococcus aureus (strain Mu3 / ATCC 700698).